The chain runs to 330 residues: MQNLTSTFVSPSMIPITSPRLRLPPPRSVVPMTTVCMEQSYKQKVVVIMGATGSGKSCLSIDLATRFSGEIVNSDKIQFYDGLKVTTNQMSILERCGVPHHLLGELPPDDSELTTSEFRSLASRSISEITARGNLPIIAGGSNSFIHALLVDRFDPKTYPFSSETSISSGLRYECCFLWVDVSVSVLFEYLSKRVDQMMESGMFEELAGFYDPRYSGSAIRAHGIHKTIGIPEFDRYFSLYPPERKQKMSEWDQARKGAYDEAVQEIKENTWRLAKKQIERIMKLKSSGWDIQRLDATPSFGRSSREIWDNTVLDESIKVVKRFLVKDKV.

Residues 1-35 (MQNLTSTFVSPSMIPITSPRLRLPPPRSVVPMTTV) constitute a chloroplast transit peptide. Residue 50 to 57 (GATGSGKS) participates in ATP binding.

The protein belongs to the IPP transferase family. In terms of tissue distribution, expressed in roots and in immature seeds with highest expression in the chalazal endosperm.

The protein resides in the plastid. It is found in the chloroplast. It catalyses the reaction dimethylallyl diphosphate + ADP = N(6)-(dimethylallyl)adenosine 5'-diphosphate + diphosphate. The catalysed reaction is dimethylallyl diphosphate + ATP = N(6)-(dimethylallyl)adenosine 5'-triphosphate + diphosphate. Its function is as follows. Involved in cytokinin biosynthesis. Catalyzes the transfer of an isopentenyl group from dimethylallyl diphosphate (DMAPP) to ATP and ADP. The protein is Adenylate isopentenyltransferase 8, chloroplastic (IPT8) of Arabidopsis thaliana (Mouse-ear cress).